The sequence spans 504 residues: Glutamate--tRNA ligase (504 aa).

The short motif at 25 to 35 (PSPTGNPHVGL) is the 'HIGH' region element. Zn(2+) contacts are provided by Cys122, Cys124, Cys149, and Glu151. The short motif at 270–274 (KLSKR) is the 'KMSKS' region element. Lys273 is a binding site for ATP.

It belongs to the class-I aminoacyl-tRNA synthetase family. Glutamate--tRNA ligase type 1 subfamily. In terms of assembly, monomer. It depends on Zn(2+) as a cofactor.

Its subcellular location is the cytoplasm. It carries out the reaction tRNA(Glu) + L-glutamate + ATP = L-glutamyl-tRNA(Glu) + AMP + diphosphate. Functionally, catalyzes the attachment of glutamate to tRNA(Glu) in a two-step reaction: glutamate is first activated by ATP to form Glu-AMP and then transferred to the acceptor end of tRNA(Glu). In Streptomyces avermitilis (strain ATCC 31267 / DSM 46492 / JCM 5070 / NBRC 14893 / NCIMB 12804 / NRRL 8165 / MA-4680), this protein is Glutamate--tRNA ligase.